We begin with the raw amino-acid sequence, 509 residues long: ATP synthase subunit alpha (509 aa).

169–176 (GDRQTGKT) provides a ligand contact to ATP.

This sequence belongs to the ATPase alpha/beta chains family. F-type ATPases have 2 components, CF(1) - the catalytic core - and CF(0) - the membrane proton channel. CF(1) has five subunits: alpha(3), beta(3), gamma(1), delta(1), epsilon(1). CF(0) has three main subunits: a(1), b(2) and c(9-12). The alpha and beta chains form an alternating ring which encloses part of the gamma chain. CF(1) is attached to CF(0) by a central stalk formed by the gamma and epsilon chains, while a peripheral stalk is formed by the delta and b chains.

The protein resides in the cell inner membrane. It catalyses the reaction ATP + H2O + 4 H(+)(in) = ADP + phosphate + 5 H(+)(out). Its function is as follows. Produces ATP from ADP in the presence of a proton gradient across the membrane. The alpha chain is a regulatory subunit. This is ATP synthase subunit alpha from Rhizobium etli (strain ATCC 51251 / DSM 11541 / JCM 21823 / NBRC 15573 / CFN 42).